Here is a 107-residue protein sequence, read N- to C-terminus: Phosphoribosyl-ATP pyrophosphatase (107 aa).

The protein belongs to the PRA-PH family.

It is found in the cytoplasm. It carries out the reaction 1-(5-phospho-beta-D-ribosyl)-ATP + H2O = 1-(5-phospho-beta-D-ribosyl)-5'-AMP + diphosphate + H(+). It functions in the pathway amino-acid biosynthesis; L-histidine biosynthesis; L-histidine from 5-phospho-alpha-D-ribose 1-diphosphate: step 2/9. The sequence is that of Phosphoribosyl-ATP pyrophosphatase from Bacillus cereus (strain ZK / E33L).